A 629-amino-acid polypeptide reads, in one-letter code: tRNA uridine 5-carboxymethylaminomethyl modification enzyme MnmG (629 aa).

13-18 provides a ligand contact to FAD; the sequence is GGGHAG. Residue 273–287 coordinates NAD(+); sequence GPRYCPSIEDKITRF.

Belongs to the MnmG family. Homodimer. Heterotetramer of two MnmE and two MnmG subunits. FAD serves as cofactor.

Its subcellular location is the cytoplasm. Functionally, NAD-binding protein involved in the addition of a carboxymethylaminomethyl (cmnm) group at the wobble position (U34) of certain tRNAs, forming tRNA-cmnm(5)s(2)U34. The protein is tRNA uridine 5-carboxymethylaminomethyl modification enzyme MnmG of Aeromonas hydrophila subsp. hydrophila (strain ATCC 7966 / DSM 30187 / BCRC 13018 / CCUG 14551 / JCM 1027 / KCTC 2358 / NCIMB 9240 / NCTC 8049).